The primary structure comprises 324 residues: tRNA dimethylallyltransferase (324 aa).

An ATP-binding site is contributed by 17 to 24; that stretch reads GPTASGKT. A substrate-binding site is contributed by 19 to 24; sequence TASGKT. 3 interaction with substrate tRNA regions span residues 42–45, 166–170, and 251–256; these read DSAL, QRIQR, and RCVGYR.

This sequence belongs to the IPP transferase family. Monomer. Mg(2+) serves as cofactor.

The catalysed reaction is adenosine(37) in tRNA + dimethylallyl diphosphate = N(6)-dimethylallyladenosine(37) in tRNA + diphosphate. Functionally, catalyzes the transfer of a dimethylallyl group onto the adenine at position 37 in tRNAs that read codons beginning with uridine, leading to the formation of N6-(dimethylallyl)adenosine (i(6)A). This Burkholderia mallei (strain NCTC 10247) protein is tRNA dimethylallyltransferase.